The chain runs to 617 residues: Zinc metalloproteinase nas-36 (617 aa).

A signal peptide spans methionine 1–alanine 22. Residues aspartate 23–arginine 126 constitute a propeptide that is removed on maturation. The Peptidase M12A domain maps to serine 127–lysine 322. Disulfide bonds link cysteine 169/cysteine 321, cysteine 192/cysteine 211, cysteine 325/cysteine 346, cysteine 348/cysteine 357, cysteine 368/cysteine 397, cysteine 425/cysteine 445, cysteine 519/cysteine 550, cysteine 523/cysteine 555, and cysteine 535/cysteine 540. N-linked (GlcNAc...) asparagine glycosylation occurs at asparagine 174. Zn(2+) is bound at residue histidine 219. Residue glutamate 220 is part of the active site. The Zn(2+) site is built by histidine 223 and histidine 229. One can recognise an EGF-like domain in the interval asparagine 317–glutamate 358. A CUB domain is found at cysteine 368–threonine 482. Residues proline 507 to proline 556 form the TSP type-1 domain.

It depends on Zn(2+) as a cofactor. In terms of tissue distribution, expressed in hypodermal cells. Also detected in the hypodermal seam cells in L4 larvae and young adults. In old adult hermaphrodites, it localizes to the vulva (at protein level).

The protein localises to the secreted. Metalloprotease. Involved in molting, a process during larval stages in which a new cuticle is formed and the old cuticle is shed. This Caenorhabditis elegans protein is Zinc metalloproteinase nas-36 (nas-36).